We begin with the raw amino-acid sequence, 161 residues long: Large ribosomal subunit protein uL15 (161 aa).

Residues 1–44 (MKLSEIADNAGSRKKRMRVGRGIGSGKGKTAGRGGKGQTARSGV) form a disordered region. The span at 21-37 (RGIGSGKGKTAGRGGKG) shows a compositional bias: gly residues.

It belongs to the universal ribosomal protein uL15 family. As to quaternary structure, part of the 50S ribosomal subunit.

Binds to the 23S rRNA. The chain is Large ribosomal subunit protein uL15 from Rhodopseudomonas palustris (strain BisA53).